Reading from the N-terminus, the 1123-residue chain is Telomerase reverse transcriptase (1123 aa).

An RNA-interacting domain 1 region spans residues 1–230; sequence MPRAPRCRAV…ARRRRGSPGS (230 aa). A GQ motif region spans residues 58 to 197; it reads VPWGARPPPA…APGLPGLPGL (140 aa). Residues 137 to 141 are required for regulating specificity for telomeric DNA and for processivity for primer elongation; the sequence is WGLLL. Positions 202-311 are disordered; that stretch reads AGAGASADLR…GVPHDPAHPE (110 aa). Residues 222–240 carry the Bipartite nuclear localization signal motif; it reads RRRRGSPGSGVPLAKRPRR. Ser-227 is subject to Phosphoserine; by PKB/AKT1. A linker region spans residues 231–308; it reads GVPLAKRPRR…GPQGVPHDPA (78 aa). Residues 260-279 are compositionally biased toward low complexity; it reads PPVSEAPAVTPAVAASPAAS. The segment at 309–539 is RNA-interacting domain 2; that stretch reads HPETKRFLYC…LARFLVLVDG (231 aa). The short motif at 312–317 is the TFLY; involved in RNA binding element; sequence TKRFLY. The QFP motif stretch occupies residues 360–510; sequence ARRMRRLPAR…MKVRDCTWLH (151 aa). The interval 381 to 401 is CP motif; the sequence is LGNHARCPYRALLRTHCPLRA. The residue at position 446 (Ser-446) is a Phosphoserine; by DYRK2. The Reverse transcriptase domain occupies 595-926; sequence EVRRHREARP…CLFPWCGLLL (332 aa). The residue at position 697 (Tyr-697) is a Phosphotyrosine; by SRC-type Tyr-kinases. Mg(2+) contacts are provided by Asp-702, Asp-859, and Asp-860. Residues 905 to 919 form a required for oligomerization region; the sequence is LGSAAPLQLPAHCLF. The interval 921 to 925 is primer grip sequence; it reads WCGLL. Residues 927-1123 form a CTE region; that stretch reads DTRTLEVSCD…LTADFKTILD (197 aa).

It belongs to the reverse transcriptase family. Telomerase subfamily. As to quaternary structure, catalytic component of the telomerase holoenzyme complex composed of one molecule of TERT, one molecule of WRAP53/TCAB1, two molecules of H/ACA ribonucleoprotein complex subunits DKC1, NOP10, NHP2 and GAR1, and a telomerase RNA template component (TERC). The telomerase holoenzyme complex is associated with TEP1, SMG6/EST1A and POT1. The molecular chaperone HSP90/P23 complex is required for correct assembly and stabilization of the active telomerase. Interacts directly with HSP90A and PTGES3. Interacts with HSPA1A; the interaction occurs in the absence of TERC and dissociates once the complex has formed. Interacts with RAN; the interaction promotes nuclear export of TERT. Interacts with XPO1. Interacts with PTPN11; the interaction retains TERT in the nucleus. Interacts with NCL (via RRM1 and C-terminal RRM4/Arg/Gly-rich domains); the interaction is important for nucleolar localization of TERT. Interacts with SMARCA4 (via the bromodomain); the interaction regulates Wnt-mediated signaling. Interacts with MCRS1 (isoform MCRS2); the interaction inhibits in vitro telomerase activity. Interacts with PIF1; the interaction has no effect on the elongation activity of TERT. Interacts with PML; the interaction recruits TERT to PML bodies and inhibits telomerase activity. Interacts with GNL3L. Interacts with isoform 1 and isoform 2 of NVL. Interacts with DHX36. Interacts with ATF7. Post-translationally, phosphorylation at Tyr-697 under oxidative stress leads to translocation of TERT to the cytoplasm and reduces its antiapoptotic activity. Dephosphorylated by SHP2/PTPN11 leading to nuclear retention. Phosphorylation at Ser-227 by the AKT pathway promotes nuclear location. Phosphorylation at the G2/M phase at Ser-446 by DYRK2 promotes ubiquitination by the EDVP complex and degradation. In terms of processing, ubiquitinated by the EDVP complex, a E3 ligase complex following phosphorylation at Ser-446 by DYRK2. Ubiquitinated leads to proteasomal degradation.

It localises to the nucleus. Its subcellular location is the nucleolus. It is found in the nucleoplasm. The protein resides in the chromosome. The protein localises to the telomere. It localises to the cytoplasm. Its subcellular location is the PML body. The enzyme catalyses DNA(n) + a 2'-deoxyribonucleoside 5'-triphosphate = DNA(n+1) + diphosphate. Telomerase is a ribonucleoprotein enzyme essential for the replication of chromosome termini in most eukaryotes. Active in progenitor and cancer cells. Inactive, or very low activity, in normal somatic cells. Catalytic component of the teleromerase holoenzyme complex whose main activity is the elongation of telomeres by acting as a reverse transcriptase that adds simple sequence repeats to chromosome ends by copying a template sequence within the RNA component of the enzyme. Catalyzes the RNA-dependent extension of 3'-chromosomal termini with the 6-nucleotide telomeric repeat unit, 5'-TTAGGG-3'. The catalytic cycle involves primer binding, primer extension and release of product once the template boundary has been reached or nascent product translocation followed by further extension. More active on substrates containing 2 or 3 telomeric repeats. Telomerase activity is regulated by a number of factors including telomerase complex-associated proteins, chaperones and polypeptide modifiers. Modulates Wnt signaling. Plays important roles in aging and antiapoptosis. The polypeptide is Telomerase reverse transcriptase (TERT) (Canis lupus familiaris (Dog)).